Here is a 248-residue protein sequence, read N- to C-terminus: UPF0736 protein ABC2536 (248 aa).

This sequence belongs to the UPF0736 family.

The chain is UPF0736 protein ABC2536 from Shouchella clausii (strain KSM-K16) (Alkalihalobacillus clausii).